The following is a 360-amino-acid chain: Phospho-N-acetylmuramoyl-pentapeptide-transferase (360 aa).

10 consecutive transmembrane segments (helical) span residues 21–41 (YITV…LWIG), 73–93 (TMGG…WANL), 94–114 (ANPY…IGFV), 132–152 (WKYF…YWLG), 168–188 (IMPQ…VGTG), 199–219 (GLAI…AWAT), 239–259 (VVVF…FNTY), 263–283 (VFMG…VAIL), 288–308 (FLLV…ILQV), and 338–358 (VIIR…VTLK).

It belongs to the glycosyltransferase 4 family. MraY subfamily. Mg(2+) serves as cofactor.

It localises to the cell inner membrane. The catalysed reaction is UDP-N-acetyl-alpha-D-muramoyl-L-alanyl-gamma-D-glutamyl-meso-2,6-diaminopimeloyl-D-alanyl-D-alanine + di-trans,octa-cis-undecaprenyl phosphate = di-trans,octa-cis-undecaprenyl diphospho-N-acetyl-alpha-D-muramoyl-L-alanyl-D-glutamyl-meso-2,6-diaminopimeloyl-D-alanyl-D-alanine + UMP. Its pathway is cell wall biogenesis; peptidoglycan biosynthesis. Functionally, catalyzes the initial step of the lipid cycle reactions in the biosynthesis of the cell wall peptidoglycan: transfers peptidoglycan precursor phospho-MurNAc-pentapeptide from UDP-MurNAc-pentapeptide onto the lipid carrier undecaprenyl phosphate, yielding undecaprenyl-pyrophosphoryl-MurNAc-pentapeptide, known as lipid I. In Haemophilus influenzae (strain ATCC 51907 / DSM 11121 / KW20 / Rd), this protein is Phospho-N-acetylmuramoyl-pentapeptide-transferase.